We begin with the raw amino-acid sequence, 432 residues long: 3-phosphoshikimate 1-carboxyvinyltransferase (432 aa).

The 3-phosphoshikimate site is built by Lys22, Ser23, and Arg27. Lys22 provides a ligand contact to phosphoenolpyruvate. Residues Gly96 and Arg127 each contribute to the phosphoenolpyruvate site. Residues Ser173, Ser174, Gln175, Ser201, Asp316, Asn339, and Lys343 each coordinate 3-phosphoshikimate. A phosphoenolpyruvate-binding site is contributed by Gln175. Asp316 serves as the catalytic Proton acceptor. The phosphoenolpyruvate site is built by Arg347, Arg391, and Lys416.

The protein belongs to the EPSP synthase family. As to quaternary structure, monomer.

It is found in the cytoplasm. It carries out the reaction 3-phosphoshikimate + phosphoenolpyruvate = 5-O-(1-carboxyvinyl)-3-phosphoshikimate + phosphate. Its pathway is metabolic intermediate biosynthesis; chorismate biosynthesis; chorismate from D-erythrose 4-phosphate and phosphoenolpyruvate: step 6/7. Functionally, catalyzes the transfer of the enolpyruvyl moiety of phosphoenolpyruvate (PEP) to the 5-hydroxyl of shikimate-3-phosphate (S3P) to produce enolpyruvyl shikimate-3-phosphate and inorganic phosphate. This is 3-phosphoshikimate 1-carboxyvinyltransferase from Haemophilus influenzae (strain ATCC 51907 / DSM 11121 / KW20 / Rd).